The sequence spans 167 residues: Peroxiredoxin Pen c 3 (167 aa).

The region spanning leucine 3–leucine 167 is the Thioredoxin domain. Catalysis depends on cysteine 60, which acts as the Cysteine sulfenic acid (-SOH) intermediate.

This sequence belongs to the peroxiredoxin family. Prx5 subfamily. Homodimer; disulfide-linked, upon oxidation.

It catalyses the reaction a hydroperoxide + [thioredoxin]-dithiol = an alcohol + [thioredoxin]-disulfide + H2O. Functionally, thiol-specific peroxidase that catalyzes the reduction of hydrogen peroxide and organic hydroperoxides to water and alcohols, respectively. Plays a role in cell protection against oxidative stress by detoxifying peroxides and as sensor of hydrogen peroxide-mediated signaling events. The protein is Peroxiredoxin Pen c 3 of Penicillium citrinum.